Consider the following 198-residue polypeptide: Ribonuclease HII (198 aa).

Residues 5–195 enclose the RNase H type-2 domain; that stretch reads LRVAGVDEAG…VKAWLASHQG (191 aa). Positions 11, 12, and 103 each coordinate a divalent metal cation.

The protein belongs to the RNase HII family. The cofactor is Mn(2+). Mg(2+) is required as a cofactor.

The protein resides in the cytoplasm. The enzyme catalyses Endonucleolytic cleavage to 5'-phosphomonoester.. Endonuclease that specifically degrades the RNA of RNA-DNA hybrids. The chain is Ribonuclease HII from Chromobacterium violaceum (strain ATCC 12472 / DSM 30191 / JCM 1249 / CCUG 213 / NBRC 12614 / NCIMB 9131 / NCTC 9757 / MK).